A 146-amino-acid polypeptide reads, in one-letter code: Large-conductance mechanosensitive channel (146 aa).

The next 2 helical transmembrane spans lie at 12–32 (AFAMKGNVVDMAVGVIIGGAF) and 88–108 (LQATFDFLIIAFSIFLFIKLI).

It belongs to the MscL family. Homopentamer.

The protein resides in the cell inner membrane. In terms of biological role, channel that opens in response to stretch forces in the membrane lipid bilayer. May participate in the regulation of osmotic pressure changes within the cell. The polypeptide is Large-conductance mechanosensitive channel (Bacteroides fragilis (strain ATCC 25285 / DSM 2151 / CCUG 4856 / JCM 11019 / LMG 10263 / NCTC 9343 / Onslow / VPI 2553 / EN-2)).